The following is a 295-amino-acid chain: Phosphate transport system permease protein PstA (295 aa).

Helical transmembrane passes span 29-49 (IALV…IWIL), 88-108 (LLIL…GIYL), 126-146 (DILL…IVVA), 149-169 (EHFS…PIVI), 198-218 (ISAI…LLAI), and 266-286 (NLAW…NILA). The 204-residue stretch at 83–286 (IAGSGLLILW…LCVLLLNILA (204 aa)) folds into the ABC transmembrane type-1 domain.

This sequence belongs to the binding-protein-dependent transport system permease family. CysTW subfamily.

The protein resides in the cell inner membrane. In terms of biological role, part of a binding-protein-dependent transport system for phosphate; probably responsible for the translocation of the substrate across the membrane. The protein is Phosphate transport system permease protein PstA (pstA) of Yersinia pestis.